A 284-amino-acid chain; its full sequence is Sulfotransferase 4A1 (284 aa).

Phosphothreonine is present on residues T8, T11, and T205.

This sequence belongs to the sulfotransferase 1 family. Expressed in brain, cerebellum and hypothalamus. Not detected in pancreas, liver, lung, intestine, kidney, uterus, adrenal gland, thymus, spleen, epididymis, testicle, and heart.

Its subcellular location is the cytoplasm. Atypical sulfotransferase family member with very low affinity for 3'-phospho-5'-adenylyl sulfate (PAPS) and very low catalytic activity towards L-triiodothyronine, thyroxine, estrone, p-nitrophenol, 2-naphthylamine, and 2-beta-naphthol. May have a role in the metabolism of drugs and neurotransmitters in the CNS. The chain is Sulfotransferase 4A1 (Sult4a1) from Mus musculus (Mouse).